Consider the following 334-residue polypeptide: Isopentenyl-diphosphate delta-isomerase (334 aa).

Position 5–6 (5–6 (RK)) interacts with substrate. FMN contacts are provided by residues 60 to 62 (AMT), Ser-90, and Asn-117. Gln-147 is a binding site for substrate. Residue Glu-148 participates in Mg(2+) binding. FMN-binding positions include Lys-179, Ser-204, Thr-209, 253–255 (GVR), and 274–275 (SR).

This sequence belongs to the IPP isomerase type 2 family. Homooctamer. Dimer of tetramers. FMN serves as cofactor. The cofactor is NADPH. Mg(2+) is required as a cofactor.

The protein localises to the cytoplasm. It catalyses the reaction isopentenyl diphosphate = dimethylallyl diphosphate. Its function is as follows. Involved in the biosynthesis of isoprenoids. Catalyzes the 1,3-allylic rearrangement of the homoallylic substrate isopentenyl (IPP) to its allylic isomer, dimethylallyl diphosphate (DMAPP). The protein is Isopentenyl-diphosphate delta-isomerase of Streptococcus gordonii (strain Challis / ATCC 35105 / BCRC 15272 / CH1 / DL1 / V288).